A 465-amino-acid polypeptide reads, in one-letter code: Siroheme synthase (465 aa).

The segment at 1 to 203 (MDFLPLFHSL…GRPAEAERLL (203 aa)) is precorrin-2 dehydrogenase /sirohydrochlorin ferrochelatase. NAD(+) is bound by residues 22 to 23 (EV) and 43 to 44 (PQ). Serine 128 bears the Phosphoserine mark. The interval 217–465 (GEVYLVGAGP…AWFEGAREDA (249 aa)) is uroporphyrinogen-III C-methyltransferase. Proline 226 is a binding site for S-adenosyl-L-methionine. The active-site Proton acceptor is the aspartate 249. Lysine 271 (proton donor) is an active-site residue. S-adenosyl-L-methionine is bound by residues 302–304 (GGD), isoleucine 307, 332–333 (TA), methionine 384, and glycine 413.

In the N-terminal section; belongs to the precorrin-2 dehydrogenase / sirohydrochlorin ferrochelatase family. The protein in the C-terminal section; belongs to the precorrin methyltransferase family.

The catalysed reaction is uroporphyrinogen III + 2 S-adenosyl-L-methionine = precorrin-2 + 2 S-adenosyl-L-homocysteine + H(+). The enzyme catalyses precorrin-2 + NAD(+) = sirohydrochlorin + NADH + 2 H(+). It catalyses the reaction siroheme + 2 H(+) = sirohydrochlorin + Fe(2+). It participates in cofactor biosynthesis; adenosylcobalamin biosynthesis; precorrin-2 from uroporphyrinogen III: step 1/1. It functions in the pathway cofactor biosynthesis; adenosylcobalamin biosynthesis; sirohydrochlorin from precorrin-2: step 1/1. Its pathway is porphyrin-containing compound metabolism; siroheme biosynthesis; precorrin-2 from uroporphyrinogen III: step 1/1. The protein operates within porphyrin-containing compound metabolism; siroheme biosynthesis; siroheme from sirohydrochlorin: step 1/1. It participates in porphyrin-containing compound metabolism; siroheme biosynthesis; sirohydrochlorin from precorrin-2: step 1/1. Functionally, multifunctional enzyme that catalyzes the SAM-dependent methylations of uroporphyrinogen III at position C-2 and C-7 to form precorrin-2 via precorrin-1. Then it catalyzes the NAD-dependent ring dehydrogenation of precorrin-2 to yield sirohydrochlorin. Finally, it catalyzes the ferrochelation of sirohydrochlorin to yield siroheme. The chain is Siroheme synthase from Pseudomonas aeruginosa (strain ATCC 15692 / DSM 22644 / CIP 104116 / JCM 14847 / LMG 12228 / 1C / PRS 101 / PAO1).